A 600-amino-acid chain; its full sequence is ATP-dependent zinc metalloprotease FtsH 1 (600 aa).

Topologically, residues 1–8 (MKTHYFKK) are cytoplasmic. A helical transmembrane segment spans residues 9 to 29 (IFNLKFLVIFFSILFCILLIL). The Extracellular portion of the chain corresponds to 30–130 (DLTFERRIKG…PKTDFHLSEL (101 aa)). Residues 131-151 (ILSLVPIVSSTIFMFYIISNI) form a helical membrane-spanning segment. The Cytoplasmic portion of the chain corresponds to 152–600 (KKSSGKLNSN…IEQLVVNTKK (449 aa)). An ATP-binding site is contributed by 215–222 (GPPGTGKT). Residue H437 participates in Zn(2+) binding. E438 is an active-site residue. Residues H441 and D513 each contribute to the Zn(2+) site.

In the central section; belongs to the AAA ATPase family. This sequence in the C-terminal section; belongs to the peptidase M41 family. In terms of assembly, homohexamer. The cofactor is Zn(2+).

It localises to the cell membrane. Functionally, acts as a processive, ATP-dependent zinc metallopeptidase for both cytoplasmic and membrane proteins. Plays a role in the quality control of integral membrane proteins. The protein is ATP-dependent zinc metalloprotease FtsH 1 of Phytoplasma mali (strain AT).